A 272-amino-acid polypeptide reads, in one-letter code: NADH-cytochrome b5 reductase 3 (272 aa).

The FAD-binding FR-type domain maps to 11–123 (DIKYPLRLID…RGPNGLLVYQ (113 aa)). Lys-13 carries the N6-acetyllysine modification. A Phosphotyrosine modification is found at Tyr-14. Position 21 is an N6-acetyllysine (Lys-21). 6 residues coordinate FAD: Arg-63, Pro-64, Tyr-65, Val-80, Lys-82, and Tyr-84. N6-acetyllysine is present on Lys-91. Residues Lys-97, Met-98, Ser-99, and Thr-156 each contribute to the FAD site.

Belongs to the flavoprotein pyridine nucleotide cytochrome reductase family. In terms of assembly, component of a complex composed of cytochrome b5, NADH-cytochrome b5 reductase (CYB5R3) and MTARC2. Interacts with MTLN; the interaction is required to maintain cellular lipid composition and leads to stimulation of mitochondrial respiratory complex I activity. FAD serves as cofactor.

It localises to the endoplasmic reticulum membrane. The protein resides in the mitochondrion outer membrane. The enzyme catalyses 2 Fe(III)-[cytochrome b5] + NADH = 2 Fe(II)-[cytochrome b5] + NAD(+) + H(+). Its function is as follows. Catalyzes the reduction of two molecules of cytochrome b5 using NADH as the electron donor. The protein is NADH-cytochrome b5 reductase 3 (CYB5R3) of Sus scrofa (Pig).